We begin with the raw amino-acid sequence, 486 residues long: BTB/POZ domain and ankyrin repeat-containing protein BOP (486 aa).

In terms of domain architecture, BTB spans Ser25–Pro115. The C2HC NPR-type zinc-finger motif lies at Arg121–Ser135. Cys124, Cys129, His131, and Cys134 together coordinate Zn(2+). 4 ANK repeats span residues Gln257–Asp286, Glu287–Tyr316, Ala321–Val350, and Asp354–Leu388. 2 disordered regions span residues Glu403–Ile442 and Gln464–Tyr486. Composition is skewed to low complexity over residues Asn406–Thr418 and Ser432–Ile442. A compositionally biased stretch (basic and acidic residues) spans Ser466 to Asp475.

This sequence belongs to the plant 'ANKYRIN-BTB/POZ' family. 'NOOT-BOP-COCH-like' (NBCL) subfamily. As to quaternary structure, homodimer. In terms of tissue distribution, expressed in xylem vessels and parenchyma cells of pedicel vascular tissue in the abscission zone (AZ). Accumulates in developing root nodules and present in roots, especially in the upper part.

The protein resides in the nucleus. It localises to the cytoplasm. It is found in the cell membrane. The protein operates within protein modification; protein ubiquitination. Functionally, may act as a substrate-specific adapter of an E3 ubiquitin-protein ligase complex (CUL3-RBX1-BTB) which mediates the ubiquitination and subsequent proteasomal degradation of target proteins. Transcriptional co-regulator involved in promoting the fate and determination of leaf and flower meristems. Required for the abscission of senescent organs, probably by regulating the cell wall disorganization in abscission zones (AZs, e.g. pulvini at the base of leaves). Involved in the coordination of the symbiotic nodule developmental program; promotes the formation of root nodules by interacting directly with APP1 to modulate the expression of the nuclear transcription factor Y subunit (NF-YA1), a key nodulin. Necessary for the robust maintenance of nodule identity throughout the nodule developmental program. The sequence is that of BTB/POZ domain and ankyrin repeat-containing protein BOP from Lupinus luteus (European yellow lupine).